A 330-amino-acid chain; its full sequence is Glycerol-3-phosphate dehydrogenase [NAD(P)+] (330 aa).

Residues serine 10, tryptophan 11, arginine 31, and lysine 104 each coordinate NADPH. Positions 104, 131, and 133 each coordinate sn-glycerol 3-phosphate. Alanine 135 contributes to the NADPH binding site. Sn-glycerol 3-phosphate is bound by residues lysine 186, aspartate 239, serine 249, arginine 250, and asparagine 251. Lysine 186 acts as the Proton acceptor in catalysis. Arginine 250 serves as a coordination point for NADPH. Valine 274 and glutamate 276 together coordinate NADPH.

The protein belongs to the NAD-dependent glycerol-3-phosphate dehydrogenase family.

Its subcellular location is the cytoplasm. The catalysed reaction is sn-glycerol 3-phosphate + NAD(+) = dihydroxyacetone phosphate + NADH + H(+). It carries out the reaction sn-glycerol 3-phosphate + NADP(+) = dihydroxyacetone phosphate + NADPH + H(+). Its pathway is membrane lipid metabolism; glycerophospholipid metabolism. In terms of biological role, catalyzes the reduction of the glycolytic intermediate dihydroxyacetone phosphate (DHAP) to sn-glycerol 3-phosphate (G3P), the key precursor for phospholipid synthesis. The protein is Glycerol-3-phosphate dehydrogenase [NAD(P)+] of Thermoanaerobacter sp. (strain X514).